The sequence spans 1279 residues: Cellulose synthase operon protein C (1279 aa).

An N-terminal signal peptide occupies residues 1–21 (MRRHTLAIAILAALASTASVA). 10 TPR repeats span residues 27 to 60 (QSLLIEQGYYWQSKKNPERALETWQKLLRLSPDQ), 62 to 94 (DALYGIGLIQVQQNHPAEAQKYLARLQALSPVP), 218 to 250 (ADETWRFALVWLGPPKPDQVSLFQQFLTVHPDD), 306 to 339 (VDALGGMGVLRQQQERYSEAENYLVQATRLPGGA), 384 to 417 (PGAAIALAGFQAQDNQFDDAEAGYRKVLARHPGD), 460 to 493 (ALRATQVGKLAEQRGDLKAAQAAYRQALDADPEN), 495 to 527 (WTRFALARMYLRDGQIRNARALIDGLLKSQPNQ), 606 to 639 (PERVAVLAAAYVEVGAAQYGLDMMQKVVENNPNP), 719 to 752 (ALGVGALARMYAASGNGKKAMELYAPLIQQNPNN), and 787 to 820 (PEILTSAARIYQGLGKNSEAAELLRKALAIENAM).

It functions in the pathway glycan metabolism; bacterial cellulose biosynthesis. In terms of biological role, required for maximal bacterial cellulose synthesis. This Pseudomonas fluorescens (strain SBW25) protein is Cellulose synthase operon protein C (bscS).